Reading from the N-terminus, the 281-residue chain is Aquaporin-9 (281 aa).

Over 1–17 (MGAFVNTKVYIENKNIR) the chain is Cytoplasmic. The chain crosses the membrane as a helical span at residues 18 to 36 (DWLSEALSMFMYMSLLLGS). Topologically, residues 37–50 (AATGHFSGREDDAL) are extracellular. The helical transmembrane segment at 51–69 (FGVIFQGFSITFGIYIGGA) threads the bilayer. The Cytoplasmic portion of the chain corresponds to 70–71 (MS). Residues 72–84 (GAIINPALTLAVA) constitute an intramembrane region (discontinuously helical). The NPA 1 signature appears at 76–78 (NPA). Residues 85-90 (LLGKIS) lie on the Cytoplasmic side of the membrane. A helical membrane pass occupies residues 91–115 (WRKCIVLQSAQYIGSFIASAVVYLI). Residues 116-157 (YNDSLDAFGAGANFTATEPGVFRKDVAGIWSTFPKTYLKERG) lie on the Extracellular side of the membrane. 2 N-linked (GlcNAc...) asparagine glycosylation sites follow: Asn-117 and Asn-128. Residues 158–175 (AIFNQIFCSMLLTFGFLA) traverse the membrane as a helical segment. The Cytoplasmic segment spans residues 176–187 (ISDYKNFRPSKG). The chain crosses the membrane as a helical span at residues 188–204 (LFPIAVGLLVMTVFLAF). Over 205–207 (SYS) the chain is Extracellular. The discontinuously helical intramembrane region spans 208–222 (TGAAMNPARDFSPRL). The NPA 2 motif lies at 213–215 (NPA). The Extracellular portion of the chain corresponds to 223–241 (WSLIIGYGIEVFSYNQYEW). A helical membrane pass occupies residues 242-262 (FWIPWLMPYVGAMLGALIYQL). Residues 263 to 281 (LIGAQWSKGQKGESKHKDP) lie on the Cytoplasmic side of the membrane.

This sequence belongs to the MIP/aquaporin (TC 1.A.8) family.

The protein resides in the cell membrane. The catalysed reaction is H2O(in) = H2O(out). Functionally, aquaglyceroporin that may modulate the water content and osmolytes during anhydrobiosis. The protein is Aquaporin-9 of Milnesium tardigradum (Water bear).